The following is a 21-amino-acid chain: Maculatin-1.1 (21 aa).

Residue Phe-21 is modified to Phenylalanine amide.

As to expression, expressed by the skin dorsal glands.

The protein resides in the secreted. Functionally, maculatin-1.1 shows significant antibacterial activity against Gram-positive bacteria, less against Gram-negative bacteria. Maculatin-1.1.1 is inactive. This is Maculatin-1.1 from Ranoidea genimaculata (Brown-spotted tree frog).